The sequence spans 117 residues: Large ribosomal subunit protein uL18 (117 aa).

Belongs to the universal ribosomal protein uL18 family. As to quaternary structure, part of the 50S ribosomal subunit; part of the 5S rRNA/L5/L18/L25 subcomplex. Contacts the 5S and 23S rRNAs.

Its function is as follows. This is one of the proteins that bind and probably mediate the attachment of the 5S RNA into the large ribosomal subunit, where it forms part of the central protuberance. This chain is Large ribosomal subunit protein uL18, found in Photorhabdus laumondii subsp. laumondii (strain DSM 15139 / CIP 105565 / TT01) (Photorhabdus luminescens subsp. laumondii).